The chain runs to 103 residues: Large ribosomal subunit protein uL24 (103 aa).

It belongs to the universal ribosomal protein uL24 family. In terms of assembly, part of the 50S ribosomal subunit.

In terms of biological role, one of two assembly initiator proteins, it binds directly to the 5'-end of the 23S rRNA, where it nucleates assembly of the 50S subunit. One of the proteins that surrounds the polypeptide exit tunnel on the outside of the subunit. In Sinorhizobium fredii (strain NBRC 101917 / NGR234), this protein is Large ribosomal subunit protein uL24.